The primary structure comprises 212 residues: Translation initiation factor IF-3 (212 aa).

Residues 190 to 203 (LVDKNSDSQDKSVS) show a composition bias toward basic and acidic residues. The segment at 190–212 (LVDKNSDSQDKSVSEEDTNEGEQ) is disordered.

It belongs to the IF-3 family. As to quaternary structure, monomer.

The protein resides in the cytoplasm. IF-3 binds to the 30S ribosomal subunit and shifts the equilibrium between 70S ribosomes and their 50S and 30S subunits in favor of the free subunits, thus enhancing the availability of 30S subunits on which protein synthesis initiation begins. This Mycoplasmopsis fermentans (Mycoplasma fermentans) protein is Translation initiation factor IF-3.